The sequence spans 653 residues: Aspartate--tRNA ligase, mitochondrial (653 aa).

The N-terminal 46 residues, 1–46, are a transit peptide targeting the mitochondrion; it reads MYLGFWLSRLCRGLSRPIGKTMRPIWGSLSRNLALSSQRIPEFSSF. Thr-218 bears the Phosphothreonine mark. Residue Ser-241 is modified to Phosphoserine. An aspartate region spans residues 243-246; the sequence is QQFK. Arg-265 contributes to the L-aspartate binding site. ATP is bound by residues 265–267 and Glu-534; that span reads RDE. Arg-541 provides a ligand contact to L-aspartate. Position 583–586 (583–586) interacts with ATP; the sequence is GLDR.

This sequence belongs to the class-II aminoacyl-tRNA synthetase family. Type 1 subfamily. As to quaternary structure, homodimer.

It is found in the mitochondrion matrix. The protein resides in the mitochondrion membrane. It catalyses the reaction tRNA(Asp) + L-aspartate + ATP = L-aspartyl-tRNA(Asp) + AMP + diphosphate. In terms of biological role, catalyzes the attachment of aspartate to tRNA(Asp) in a two-step reaction: aspartate is first activated by ATP to form Asp-AMP and then transferred to the acceptor end of tRNA(Asp). The protein is Aspartate--tRNA ligase, mitochondrial (Dars2) of Mus musculus (Mouse).